The following is a 616-amino-acid chain: Dihydroxy-acid dehydratase (616 aa).

Position 81 (D81) interacts with Mg(2+). C122 provides a ligand contact to [2Fe-2S] cluster. Positions 123 and 124 each coordinate Mg(2+). Residue K124 is modified to N6-carboxylysine. C195 contacts [2Fe-2S] cluster. E491 is a Mg(2+) binding site. S517 (proton acceptor) is an active-site residue.

Belongs to the IlvD/Edd family. In terms of assembly, homodimer. The cofactor is [2Fe-2S] cluster. It depends on Mg(2+) as a cofactor.

It catalyses the reaction (2R)-2,3-dihydroxy-3-methylbutanoate = 3-methyl-2-oxobutanoate + H2O. It carries out the reaction (2R,3R)-2,3-dihydroxy-3-methylpentanoate = (S)-3-methyl-2-oxopentanoate + H2O. It functions in the pathway amino-acid biosynthesis; L-isoleucine biosynthesis; L-isoleucine from 2-oxobutanoate: step 3/4. It participates in amino-acid biosynthesis; L-valine biosynthesis; L-valine from pyruvate: step 3/4. Functions in the biosynthesis of branched-chain amino acids. Catalyzes the dehydration of (2R,3R)-2,3-dihydroxy-3-methylpentanoate (2,3-dihydroxy-3-methylvalerate) into 2-oxo-3-methylpentanoate (2-oxo-3-methylvalerate) and of (2R)-2,3-dihydroxy-3-methylbutanoate (2,3-dihydroxyisovalerate) into 2-oxo-3-methylbutanoate (2-oxoisovalerate), the penultimate precursor to L-isoleucine and L-valine, respectively. The sequence is that of Dihydroxy-acid dehydratase from Shewanella sediminis (strain HAW-EB3).